The sequence spans 473 residues: NAC domain-containing protein 68 (473 aa).

The region spanning 4-154 is the NAC domain; that stretch reads GLIGYRFSPT…KYVVCQVKYK (151 aa). Residues 108 to 160 mediate DNA binding; that stretch reads IGIKKTLVYHEGKSPHGVRTPWVMHEYHITCLPHHKRKYVVCQVKYKGEAAEI. The segment at 326-380 is disordered; it reads DHMPRKPVTGTIDYSSDSGSDAGSISTTSYQGTSSPNISVGSSSRHLSSCSSTDS. Low complexity-rich tracts occupy residues 340-354 and 364-379; these read SSDS…STTS and SVGS…SSTD. A helical membrane pass occupies residues 446 to 468; it reads FIYLMKMIIGNIISVLLPVKRLI.

It is found in the membrane. It localises to the nucleus. Functionally, transcription activator activated by proteolytic cleavage through regulated intramembrane proteolysis (RIP) mediated by calpain or its functional homolog. Regulates cytokinin signaling during cell division. This chain is NAC domain-containing protein 68 (NAC68), found in Arabidopsis thaliana (Mouse-ear cress).